The following is a 490-amino-acid chain: MANPLHLVLLGAALAGLLLSGSSVFISRRAANDVLARTRRANSFLEELKKGNLERECMEENCSYEEALEVFEDREKTNEFWNKYVDGDQCESNPCQNQGTCKDGLGMYTCSCVEGYEGQDCEPVTRKLCSLDNGGCDQFCKEEENSVLCSCASGYTLGDNGKSCISTELFPCGKVTLGRWRRSPATNSSEGPPEAPGPEQQDDGNLTATENPFNLLDSPEPPPEDDSSSLVRIVGGQDCRDGECPWQALLVNEENEGFCGGTILSEYHVLTAAHCLHQAKRFKVRVGDRDTEHEEGNEETHEVEVVVKHNRFVKETYDFDIAVLRLKTPITFRRNVAPACLPQKDWAESTLMAQKTGIVSGFGRTHEMGRLSTTLKMLEVPYVDRNSCKRSSSFTITQNMFCAGYDARPEDACQGDSGGPHVTRFRDTYFVTGIVSWGEGCARKGKFGVYTKVSNFLKWIEKSMRARAVPVAEAAGTPGPTQPTIKGSPS.

The N-terminal stretch at 1–20 is a signal peptide; the sequence is MANPLHLVLLGAALAGLLLS. Residues 21–40 constitute a propeptide that is removed on maturation; the sequence is GSSVFISRRAANDVLARTRR. The Gla domain occupies 41-85; that stretch reads ANSFLEELKKGNLERECMEENCSYEEALEVFEDREKTNEFWNKYV. A 4-carboxyglutamate mark is found at E46, E47, E54, E56, E59, and E60. Cysteines 57 and 62 form a disulfide. N61 is a glycosylation site (N-linked (GlcNAc...) asparagine). 4-carboxyglutamate occurs at positions 65, 66, 69, 72, 75, and 79. The EGF-like 1; calcium-binding domain maps to 86–122; that stretch reads DGDQCESNPCQNQGTCKDGLGMYTCSCVEGYEGQDCE. Cystine bridges form between C90/C101, C95/C110, C112/C121, C129/C140, C136/C149, C151/C164, C172/C340, C239/C244, C259/C275, C388/C402, and C413/C441. A (3R)-3-hydroxyaspartate modification is found at D103. The EGF-like 2 domain occupies 125–165; sequence TRKLCSLDNGGCDQFCKEEENSVLCSCASGYTLGDNGKSCI. The disordered stretch occupies residues 183-230; sequence SPATNSSEGPPEAPGPEQQDDGNLTATENPFNLLDSPEPPPEDDSSSL. Residues 184 to 232 constitute a propeptide, activation peptide; it reads PATNSSEGPPEAPGPEQQDDGNLTATENPFNLLDSPEPPPEDDSSSLVR. 2 N-linked (GlcNAc...) asparagine glycosylation sites follow: N187 and N205. Residues 203 to 212 show a composition bias toward polar residues; sequence DGNLTATENP. Positions 233-465 constitute a Peptidase S1 domain; sequence IVGGQDCRDG…FLKWIEKSMR (233 aa). Active-site charge relay system residues include H274 and D320. S417 serves as the catalytic Charge relay system.

It belongs to the peptidase S1 family. In terms of assembly, the two chains are formed from a single-chain precursor by the excision of two Arg residues and are held together by 1 or more disulfide bonds. Forms a heterodimer with SERPINA5. The vitamin K-dependent, enzymatic carboxylation of some glutamate residues allows the modified protein to bind calcium. In terms of processing, N- and O-glycosylated. Post-translationally, proteolytically cleaved and activated by cathepsin CTSG. The activation peptide is cleaved by factor IXa (in the intrinsic pathway), or by factor VIIa (in the extrinsic pathway). The iron and 2-oxoglutarate dependent 3-hydroxylation of aspartate and asparagine is (R) stereospecific within EGF domains.

The protein resides in the secreted. The enzyme catalyses Selective cleavage of Arg-|-Thr and then Arg-|-Ile bonds in prothrombin to form thrombin.. With respect to regulation, inhibited by SERPINA5. Functionally, factor Xa is a vitamin K-dependent glycoprotein that converts prothrombin to thrombin in the presence of factor Va, calcium and phospholipid during blood clotting. Factor Xa activates pro-inflammatory signaling pathways in a protease-activated receptor (PAR)-dependent manner. In Oryctolagus cuniculus (Rabbit), this protein is Coagulation factor X (F10).